The primary structure comprises 105 residues: Antitoxin HigA-1 (105 aa).

In terms of domain architecture, HTH cro/C1-type spans 15–69 (LKVEFLEPMGITSKALAEAMGVHRNTVSNLINGGVLTAPVAIKLAAALGNTPEFW). Positions 27 to 46 (SKALAEAMGVHRNTVSNLIN) form a DNA-binding region, H-T-H motif.

Functionally, antitoxin component of a type II toxin-antitoxin (TA) system that counteracts the effect of the HigB-1 toxin. Binds to its own promoter and regulates transcription of the higB-1/higA-1 operon. This chain is Antitoxin HigA-1 (higA-1), found in Vibrio cholerae serotype O1 (strain ATCC 39315 / El Tor Inaba N16961).